A 564-amino-acid polypeptide reads, in one-letter code: Ribulokinase (564 aa).

It belongs to the ribulokinase family.

The enzyme catalyses D-ribulose + ATP = D-ribulose 5-phosphate + ADP + H(+). It catalyses the reaction L-ribulose + ATP = L-ribulose 5-phosphate + ADP + H(+). It participates in carbohydrate degradation; L-arabinose degradation via L-ribulose; D-xylulose 5-phosphate from L-arabinose (bacterial route): step 2/3. The sequence is that of Ribulokinase from Anoxybacillus flavithermus (strain DSM 21510 / WK1).